Consider the following 816-residue polypeptide: MAEPLKEEDGEDGSAEPPGPVKAEPAHTAASVAAKNLALLKARSFDVTFDVGDEYEIIETIGNGAYGVVSSARRRLTGQQVAIKKIPNAFDVVTNAKRTLRELKILKHFKHDNIIAIKDILRPTVPYGEFKSVYVVLDLMESDLHQIIHSSQPLTLEHVRYFLYQLLRGLKYMHSAQVIHRDLKPSNLLVNENCELKIGDFGMARGLCTSPAEHQYFMTEYVATRWYRAPELMLSLHEYTQAIDLWSVGCIFGEMLARRQLFPGKNYVHQLQLIMMVLGTPSPAVIQAVGAERVRAYIQSLPPRQPVPWETVYPGADRQALSLLGRMLRFEPSARISAAAALRHPFLAKYHDPDDEPDCAPPFDFAFDREALTRERIKEAIVAEIEDFHARREGIRQQIRFQPSLQPVASEPGCPDVEMPSPWAPSGDCAMESPPPAPPPCPGPAPDTIDLTLQPPPPVSEPAPPKKDGAISDNTKAALKAALLKSLRSRLRDGPSAPLEAPEPRKPVTAQERQREREEKRRRRQERAKEREKRRQERERKERGAGASGGPSTDPLAGLVLSDNDRSLLERWTRMARPAAPALTSVPAPAPAPTPTPTPVQPTSPPPGPVAQPTGPQPQSAGSTSGPVPQPACPPPGPAPHPTGPPGPIPVPAPPQIATSTSLLAAQSLVPPPGLPGSSTPGVLPYFPPGLPPPDAGGAPQSSMSESPDVNLVTQQLSKSQVEDPLPPVFSGTPKGSGAGYGVGFDLEEFLNQSFDMGVADGPQDGQADSASLSASLLADWLEGHGMNPADIESLQREIQMDSPMLLADLPDLQDP.

The segment at 1 to 26 is disordered; sequence MAEPLKEEDGEDGSAEPPGPVKAEPA. Ala-2 carries the post-translational modification N-acetylalanine. The segment at 2-77 is required for cytoplasmic targeting; that stretch reads AEPLKEEDGE…VVSSARRRLT (76 aa). One can recognise a Protein kinase domain in the interval 55–347; sequence YEIIETIGNG…AAAALRHPFL (293 aa). Residues 61-69 and Lys-84 each bind ATP; that span reads IGNGAYGVV. Residues 78–139 are required for binding to MAP2K5; it reads GQQVAIKKIP…FKSVYVVLDL (62 aa). The tract at residues 140–406 is necessary for oligomerization; it reads MESDLHQIIH…QQIRFQPSLQ (267 aa). Asp-182 functions as the Proton acceptor in the catalytic mechanism. A TXY motif is present at residues 219-221; the sequence is TEY. Positions 406 to 737 are disordered; the sequence is QPVASEPGCP…PVFSGTPKGS (332 aa). The interval 407-806 is may not be required for kinase activity; required to stimulate MEF2C activity; it reads PVASEPGCPD…REIQMDSPML (400 aa). Pro residues-rich tracts occupy residues 433 to 445 and 454 to 463; these read SPPP…PGPA and QPPPPVSEPA. Residues 476-486 show a composition bias toward low complexity; that stretch reads KAALKAALLKS. 3 stretches are compositionally biased toward basic and acidic residues: residues 502-519, 527-544, and 563-573; these read PEPR…EREE, RAKE…KERG, and DNDRSLLERWT. Residues 505–539 carry the Nuclear localization signal motif; that stretch reads RKPVTAQERQREREEKRRRRQERAKEREKRRQERE. The span at 578–587 shows a compositional bias: low complexity; it reads PAAPALTSVP. Composition is skewed to pro residues over residues 588-610 and 628-655; these read APAP…PGPV and VPQP…PAPP. A compositionally biased stretch (low complexity) spans 676–685; that stretch reads PGSSTPGVLP. The span at 686–695 shows a compositional bias: pro residues; sequence YFPPGLPPPD. The segment covering 701-720 has biased composition (polar residues); the sequence is QSSMSESPDVNLVTQQLSKS. Ser-720 carries the post-translational modification Phosphoserine. Phosphothreonine is present on Thr-733.

Belongs to the protein kinase superfamily. CMGC Ser/Thr protein kinase family. MAP kinase subfamily. Interacts with MAP2K5. Forms oligomers. Interacts with MEF2A, MEF2C and MEF2D; the interaction phosphorylates the MEF2s and enhances transcriptional activity of MEF2A, MEF2C but not MEF2D. Interacts with SGK1. Preferentially interacts with PML isoform PML-4 but shows interaction also with its other isoforms: isoform PML-1, isoform PML-2, isoform PML-3 and isoform PML-6. Interacts (via N-terminal half) with HSP90AB1-CDC37 chaperone complex in resting cells; the interaction is MAP2K5-independent and prevents MAPK7 from ubiquitination and proteasomal degradation. Interacts with STUB1/CHIP; the interaction is enhanced in the presence of IGF1 or MAP2K5 and promotes STUB1/CHIP E3 ligase activity. It depends on Mg(2+) as a cofactor. Post-translationally, dually phosphorylated on Thr-219 and Tyr-221, which activates the enzyme. Autophosphorylated in vitro on threonine and tyrosine residues when the C-terminal part of the kinase, which could have a regulatory role, is absent. Expressed in many adult tissues. Abundant in heart, placenta, lung, kidney and skeletal muscle. Not detectable in liver.

It localises to the cytoplasm. The protein resides in the nucleus. It is found in the PML body. It catalyses the reaction L-seryl-[protein] + ATP = O-phospho-L-seryl-[protein] + ADP + H(+). The catalysed reaction is L-threonyl-[protein] + ATP = O-phospho-L-threonyl-[protein] + ADP + H(+). Activated by tyrosine and threonine phosphorylation. Activated in response to hyperosmolarity, hydrogen peroxide, and epidermal growth factor (EGF). Plays a role in various cellular processes such as proliferation, differentiation and cell survival. The upstream activator of MAPK7 is the MAPK kinase MAP2K5. Upon activation, it translocates to the nucleus and phosphorylates various downstream targets including MEF2C. EGF activates MAPK7 through a Ras-independent and MAP2K5-dependent pathway. As part of the MAPK/ERK signaling pathway, acts as a negative regulator of apoptosis in cardiomyocytes via interaction with STUB1/CHIP and promotion of STUB1-mediated ubiquitination and degradation of ICER-type isoforms of CREM. May have a role in muscle cell differentiation. May be important for endothelial function and maintenance of blood vessel integrity. MAP2K5 and MAPK7 interact specifically with one another and not with MEK1/ERK1 or MEK2/ERK2 pathways. Phosphorylates SGK1 at Ser-78 and this is required for growth factor-induced cell cycle progression. Involved in the regulation of p53/TP53 by disrupting the PML-MDM2 interaction. In Homo sapiens (Human), this protein is Mitogen-activated protein kinase 7 (MAPK7).